Reading from the N-terminus, the 234-residue chain is ATP synthase subunit a 2 (234 aa).

5 helical membrane-spanning segments follow: residues 20 to 40 (ATLI…WFVT), 78 to 98 (YLPF…LSVI), 107 to 127 (SLST…LYGV), 169 to 189 (VMSG…FFPV), and 194 to 214 (LGLL…MVFI).

This sequence belongs to the ATPase A chain family. F-type ATPases have 2 components, CF(1) - the catalytic core - and CF(0) - the membrane proton channel. CF(1) has five subunits: alpha(3), beta(3), gamma(1), delta(1), epsilon(1). CF(0) has four main subunits: a, b, b' and c.

The protein resides in the cellular thylakoid membrane. In terms of biological role, key component of the proton channel; it plays a direct role in the translocation of protons across the membrane. This Acaryochloris marina (strain MBIC 11017) protein is ATP synthase subunit a 2.